The sequence spans 439 residues: Ribosomal protein uS12 methylthiotransferase RimO (439 aa).

In terms of domain architecture, MTTase N-terminal spans 5–117 (KKLHLISLGC…IDELIASKQS (113 aa)). Residues C14, C48, C80, C149, C153, and C156 each contribute to the [4Fe-4S] cluster site. Positions 135 to 363 (TGSNYHAYIK…GEIAERSTLR (229 aa)) constitute a Radical SAM core domain. One can recognise a TRAM domain in the interval 366 to 437 (EKMVGKTVEL…GMQLLATLIK (72 aa)).

It belongs to the methylthiotransferase family. RimO subfamily. It depends on [4Fe-4S] cluster as a cofactor.

It is found in the cytoplasm. It catalyses the reaction L-aspartate(89)-[ribosomal protein uS12]-hydrogen + (sulfur carrier)-SH + AH2 + 2 S-adenosyl-L-methionine = 3-methylsulfanyl-L-aspartate(89)-[ribosomal protein uS12]-hydrogen + (sulfur carrier)-H + 5'-deoxyadenosine + L-methionine + A + S-adenosyl-L-homocysteine + 2 H(+). Its function is as follows. Catalyzes the methylthiolation of an aspartic acid residue of ribosomal protein uS12. This is Ribosomal protein uS12 methylthiotransferase RimO from Sulfurovum sp. (strain NBC37-1).